We begin with the raw amino-acid sequence, 257 residues long: Small ribosomal subunit protein eS1 (257 aa).

A disordered region spans residues 237–257; sequence GADGEKVDRPDDYEPPVQQEV. Residues 239-248 show a composition bias toward basic and acidic residues; it reads DGEKVDRPDD.

It belongs to the eukaryotic ribosomal protein eS1 family. As to quaternary structure, component of the small ribosomal subunit. Mature ribosomes consist of a small (40S) and a large (60S) subunit. The 40S subunit contains about 33 different proteins and 1 molecule of RNA (18S). The 60S subunit contains about 49 different proteins and 3 molecules of RNA (28S, 5.8S and 5S).

The protein localises to the cytoplasm. This Caenorhabditis elegans protein is Small ribosomal subunit protein eS1.